Reading from the N-terminus, the 454-residue chain is tRNA-2-methylthio-N(6)-dimethylallyladenosine synthase (454 aa).

Positions 11-128 (KKLYIQTHGC…LPEMIETPRE (118 aa)) constitute an MTTase N-terminal domain. Residues cysteine 20, cysteine 57, cysteine 91, cysteine 165, cysteine 169, and cysteine 172 each coordinate [4Fe-4S] cluster. One can recognise a Radical SAM core domain in the interval 151-382 (EADGATAFVS…QTRIIQQAQE (232 aa)). In terms of domain architecture, TRAM spans 385–449 (RRMVGNTERV…PNSLRGVLLG (65 aa)).

Belongs to the methylthiotransferase family. MiaB subfamily. As to quaternary structure, monomer. [4Fe-4S] cluster is required as a cofactor.

The protein resides in the cytoplasm. The enzyme catalyses N(6)-dimethylallyladenosine(37) in tRNA + (sulfur carrier)-SH + AH2 + 2 S-adenosyl-L-methionine = 2-methylsulfanyl-N(6)-dimethylallyladenosine(37) in tRNA + (sulfur carrier)-H + 5'-deoxyadenosine + L-methionine + A + S-adenosyl-L-homocysteine + 2 H(+). Catalyzes the methylthiolation of N6-(dimethylallyl)adenosine (i(6)A), leading to the formation of 2-methylthio-N6-(dimethylallyl)adenosine (ms(2)i(6)A) at position 37 in tRNAs that read codons beginning with uridine. The chain is tRNA-2-methylthio-N(6)-dimethylallyladenosine synthase from Saccharophagus degradans (strain 2-40 / ATCC 43961 / DSM 17024).